A 554-amino-acid polypeptide reads, in one-letter code: MRSKKMTHGLEKAPHRSLLHALGLTREELARPLVGVVNAANEVVPGHIHLDDIAEAVKAGVRAAGGTPLEFPAIAVCDGLAMNHEGMRFSLPSRELIADSIEIMATAHPFDALVFIPNCDKSVPGMLMAMLRLDVPSVMVSGGPMLAGATLAGRADLITVFEGVGRVQRGDMTEAELDELVEGACPGCGSCAGMFTANSMNCLAETIGLALPGNGTTPAVTAARIRLAKHAGMKVMEMLERNIRPRDIVTEKAVANAVAVDMALGCSTNTVLHLPAVFAEAGLDLTLDIFDKVSRKTPNLCKLSPAGHHHIQDLHAAGGIPAVMAELDRIGLIDRSAMTVTGRTVGENLDALGAKVRDADVIRPVDAPYSPQGGIAILKGSLAPGGAVVKQSAVAPEMMVREAVARVFDSEEAACEAIMGGRIKAGDAIVIRYEGPKGGPGMREMLTPTSAIAGMGLGADVALITDGRFSGGTRGAAIGHVSPEAAEGGPIGLVQEGDRIRIDIPARALDLLVDEDELARRRAAFVPVEKEITSPLLRRYARMVSSAATGARQR.

D78 provides a ligand contact to Mg(2+). C119 provides a ligand contact to [2Fe-2S] cluster. Residues D120 and K121 each contribute to the Mg(2+) site. K121 is modified (N6-carboxylysine). C191 contacts [2Fe-2S] cluster. E444 serves as a coordination point for Mg(2+). S470 serves as the catalytic Proton acceptor.

This sequence belongs to the IlvD/Edd family. As to quaternary structure, homodimer. It depends on [2Fe-2S] cluster as a cofactor. Mg(2+) is required as a cofactor.

It catalyses the reaction (2R)-2,3-dihydroxy-3-methylbutanoate = 3-methyl-2-oxobutanoate + H2O. The catalysed reaction is (2R,3R)-2,3-dihydroxy-3-methylpentanoate = (S)-3-methyl-2-oxopentanoate + H2O. It functions in the pathway amino-acid biosynthesis; L-isoleucine biosynthesis; L-isoleucine from 2-oxobutanoate: step 3/4. It participates in amino-acid biosynthesis; L-valine biosynthesis; L-valine from pyruvate: step 3/4. In terms of biological role, functions in the biosynthesis of branched-chain amino acids. Catalyzes the dehydration of (2R,3R)-2,3-dihydroxy-3-methylpentanoate (2,3-dihydroxy-3-methylvalerate) into 2-oxo-3-methylpentanoate (2-oxo-3-methylvalerate) and of (2R)-2,3-dihydroxy-3-methylbutanoate (2,3-dihydroxyisovalerate) into 2-oxo-3-methylbutanoate (2-oxoisovalerate), the penultimate precursor to L-isoleucine and L-valine, respectively. This Nitratidesulfovibrio vulgaris (strain ATCC 29579 / DSM 644 / CCUG 34227 / NCIMB 8303 / VKM B-1760 / Hildenborough) (Desulfovibrio vulgaris) protein is Dihydroxy-acid dehydratase.